Reading from the N-terminus, the 266-residue chain is Secreted RxLR effector protein 128 (266 aa).

The N-terminal stretch at 1–18 (MRGAFYTAIALLIGRSQT) is a signal peptide. Residues 48 to 63 (RYLRDGLAHSATNEER) carry the RxLR-dEER motif.

The protein belongs to the RxLR effector family.

It is found in the secreted. The protein localises to the host nucleus. Functionally, secreted effector that dos not suppress the host cell death induced by cell death-inducing proteins. The sequence is that of Secreted RxLR effector protein 128 from Plasmopara viticola (Downy mildew of grapevine).